Reading from the N-terminus, the 341-residue chain is L-threonine 3-dehydrogenase (341 aa).

Cysteine 38 provides a ligand contact to Zn(2+). Active-site charge relay system residues include threonine 40 and histidine 43. Zn(2+) is bound by residues histidine 63, glutamate 64, cysteine 93, cysteine 96, cysteine 99, and cysteine 107. NAD(+)-binding positions include isoleucine 175, aspartate 195, arginine 200, 262 to 264 (LGI), and 286 to 287 (IY).

This sequence belongs to the zinc-containing alcohol dehydrogenase family. As to quaternary structure, homotetramer. The cofactor is Zn(2+).

The protein localises to the cytoplasm. The enzyme catalyses L-threonine + NAD(+) = (2S)-2-amino-3-oxobutanoate + NADH + H(+). The protein operates within amino-acid degradation; L-threonine degradation via oxydo-reductase pathway; glycine from L-threonine: step 1/2. Functionally, catalyzes the NAD(+)-dependent oxidation of L-threonine to 2-amino-3-ketobutyrate. The sequence is that of L-threonine 3-dehydrogenase from Klebsiella pneumoniae (strain 342).